Reading from the N-terminus, the 404-residue chain is Probable tRNA sulfurtransferase (404 aa).

One can recognise a THUMP domain in the interval 61–166; the sequence is EAVSERLKDV…SGYSYIMCDE (106 aa). Residues 184–185, 209–210, arginine 266, glycine 288, and glutamine 297 contribute to the ATP site; these read LL and HF.

The protein belongs to the ThiI family.

It localises to the cytoplasm. It carries out the reaction [ThiI sulfur-carrier protein]-S-sulfanyl-L-cysteine + a uridine in tRNA + 2 reduced [2Fe-2S]-[ferredoxin] + ATP + H(+) = [ThiI sulfur-carrier protein]-L-cysteine + a 4-thiouridine in tRNA + 2 oxidized [2Fe-2S]-[ferredoxin] + AMP + diphosphate. It catalyses the reaction [ThiS sulfur-carrier protein]-C-terminal Gly-Gly-AMP + S-sulfanyl-L-cysteinyl-[cysteine desulfurase] + AH2 = [ThiS sulfur-carrier protein]-C-terminal-Gly-aminoethanethioate + L-cysteinyl-[cysteine desulfurase] + A + AMP + 2 H(+). It functions in the pathway cofactor biosynthesis; thiamine diphosphate biosynthesis. In terms of biological role, catalyzes the ATP-dependent transfer of a sulfur to tRNA to produce 4-thiouridine in position 8 of tRNAs, which functions as a near-UV photosensor. Also catalyzes the transfer of sulfur to the sulfur carrier protein ThiS, forming ThiS-thiocarboxylate. This is a step in the synthesis of thiazole, in the thiamine biosynthesis pathway. The sulfur is donated as persulfide by IscS. The polypeptide is Probable tRNA sulfurtransferase (Bacillus cereus (strain AH820)).